We begin with the raw amino-acid sequence, 238 residues long: 1-(5-phosphoribosyl)-5-[(5-phosphoribosylamino)methylideneamino] imidazole-4-carboxamide isomerase (238 aa).

Residue D8 is the Proton acceptor of the active site. D129 (proton donor) is an active-site residue.

It belongs to the HisA/HisF family.

It localises to the cytoplasm. It catalyses the reaction 1-(5-phospho-beta-D-ribosyl)-5-[(5-phospho-beta-D-ribosylamino)methylideneamino]imidazole-4-carboxamide = 5-[(5-phospho-1-deoxy-D-ribulos-1-ylimino)methylamino]-1-(5-phospho-beta-D-ribosyl)imidazole-4-carboxamide. The protein operates within amino-acid biosynthesis; L-histidine biosynthesis; L-histidine from 5-phospho-alpha-D-ribose 1-diphosphate: step 4/9. This is 1-(5-phosphoribosyl)-5-[(5-phosphoribosylamino)methylideneamino] imidazole-4-carboxamide isomerase from Anaeromyxobacter dehalogenans (strain 2CP-1 / ATCC BAA-258).